The primary structure comprises 504 residues: MQSRRPVMLVILDGWGWREDPADNAVLQAKTPTFDALWTNGPHAFLRTSGKSVGLPNGQMGNSEVGHLNIGAGRVVMQDLPRISDAIANGEIERAPGLVAFIDKLKASGGTCHLMGLVSPGGVHSLQDHACALAKILAKAGVKTVLHAFTDGRDTPPKSAVDDIVRLRAELPPNVPIATVSGRYYAMDRDNRWERVSKAYGVIADADGPRFADANAVIADGYAAGVNDEFIVPAVIGDYQGMRDGDGVLCFNFRADRVREILAALLDSAFAGFPRKQVKQIAAAAGMTQYSTALDALMGTIFPPQSLVNGLGQVVADAGLHQLRMAETEKYPHVTYFLNGGEEVPYPGEDRIMVPSPKVATYDLQPEMSAPELGDKAVAAIESGKYDLIVLNFANPDMVGHTGSLPAAIKAVETVDTQLGHIVAAIRKAGGALLVTADHGNCEMMRDPETGGPHTAHTTNPVPVLLVGDNGPLADGQLSDLAPTLLKLMELPQPAEMTGKSLIG.

The Mn(2+) site is built by Asp-13 and Ser-63. The active-site Phosphoserine intermediate is Ser-63. Substrate-binding positions include His-124, 153–154 (RD), Arg-183, Arg-189, 254–257 (RADR), and Lys-330. The Mn(2+) site is built by Asp-397, His-401, Asp-438, His-439, and His-457.

It belongs to the BPG-independent phosphoglycerate mutase family. As to quaternary structure, monomer. Mn(2+) is required as a cofactor.

The catalysed reaction is (2R)-2-phosphoglycerate = (2R)-3-phosphoglycerate. The protein operates within carbohydrate degradation; glycolysis; pyruvate from D-glyceraldehyde 3-phosphate: step 3/5. Its function is as follows. Catalyzes the interconversion of 2-phosphoglycerate and 3-phosphoglycerate. The chain is 2,3-bisphosphoglycerate-independent phosphoglycerate mutase from Rhodopseudomonas palustris (strain ATCC BAA-98 / CGA009).